The chain runs to 548 residues: Sensor protein TdiS (548 aa).

In terms of domain architecture, PAS 1 spans 20–89; sequence DPATGYEVIF…IGENYGHFFE (70 aa). Residues 94 to 145 enclose the PAC 1 domain; it reads FKDERPIIRKDGSVIWCIVTGSLLDSSNPRLGSIWVVQDISEHKRTEDDLKA. Residues 185–256 form the PAS 2 domain; that stretch reads HREKYEKLFH…RKRLPWRIHD (72 aa). The PAC 2 domain occupies 263-314; it reads KNIEIGMREEESRKQRWLSVSSSLLELKGQKMVVAAFTDITYRKRIEELERL. One can recognise a Histidine kinase domain in the interval 334 to 548; sequence ALAHQMGQPL…GSKFQFTLPI (215 aa). H337 bears the Phosphohistidine; by autocatalysis mark.

In terms of processing, autophosphorylated.

It carries out the reaction ATP + protein L-histidine = ADP + protein N-phospho-L-histidine.. In terms of biological role, member of the two-component regulatory system TdiR/TdiS, which probably regulates transcription of toluene catabolic genes (bss operon). May activate TdiR by phosphorylation. This chain is Sensor protein TdiS (tdiS), found in Thauera aromatica.